We begin with the raw amino-acid sequence, 156 residues long: ATP synthase subunit b (156 aa).

A helical transmembrane segment spans residues 3-23 (ITLTIFAQALAFAGLIWIVAT).

The protein belongs to the ATPase B chain family. F-type ATPases have 2 components, F(1) - the catalytic core - and F(0) - the membrane proton channel. F(1) has five subunits: alpha(3), beta(3), gamma(1), delta(1), epsilon(1). F(0) has three main subunits: a(1), b(2) and c(10-14). The alpha and beta chains form an alternating ring which encloses part of the gamma chain. F(1) is attached to F(0) by a central stalk formed by the gamma and epsilon chains, while a peripheral stalk is formed by the delta and b chains.

The protein resides in the cell inner membrane. F(1)F(0) ATP synthase produces ATP from ADP in the presence of a proton or sodium gradient. F-type ATPases consist of two structural domains, F(1) containing the extramembraneous catalytic core and F(0) containing the membrane proton channel, linked together by a central stalk and a peripheral stalk. During catalysis, ATP synthesis in the catalytic domain of F(1) is coupled via a rotary mechanism of the central stalk subunits to proton translocation. Functionally, component of the F(0) channel, it forms part of the peripheral stalk, linking F(1) to F(0). This is ATP synthase subunit b from Xanthomonas oryzae pv. oryzae (strain MAFF 311018).